Here is a 165-residue protein sequence, read N- to C-terminus: Phosphopantetheine adenylyltransferase (165 aa).

Threonine 10 lines the substrate pocket. Residues 10 to 11 (TF) and histidine 18 each bind ATP. Substrate-binding residues include lysine 42, leucine 75, and arginine 89. Residues 90–92 (GVR), glutamate 100, and 125–131 (VSFISSS) contribute to the ATP site.

The protein belongs to the bacterial CoaD family. In terms of assembly, homohexamer. It depends on Mg(2+) as a cofactor.

Its subcellular location is the cytoplasm. The enzyme catalyses (R)-4'-phosphopantetheine + ATP + H(+) = 3'-dephospho-CoA + diphosphate. Its pathway is cofactor biosynthesis; coenzyme A biosynthesis; CoA from (R)-pantothenate: step 4/5. In terms of biological role, reversibly transfers an adenylyl group from ATP to 4'-phosphopantetheine, yielding dephospho-CoA (dPCoA) and pyrophosphate. The polypeptide is Phosphopantetheine adenylyltransferase (Buchnera aphidicola subsp. Schizaphis graminum (strain Sg)).